A 421-amino-acid chain; its full sequence is Adenylosuccinate synthetase (421 aa).

Residues 11–17 (GDEGKGK) and 39–41 (GHT) contribute to the GTP site. Catalysis depends on aspartate 12, which acts as the Proton acceptor. Positions 12 and 39 each coordinate Mg(2+). Residues 12–15 (DEGK), 37–40 (NAGH), threonine 129, arginine 143, asparagine 219, threonine 234, and arginine 298 each bind IMP. The active-site Proton donor is histidine 40. Residue 294–300 (VTTGRRR) participates in substrate binding. GTP is bound by residues arginine 300, 326–328 (KLD), and 409–411 (GTG).

It belongs to the adenylosuccinate synthetase family. As to quaternary structure, homodimer. It depends on Mg(2+) as a cofactor.

It is found in the cytoplasm. It carries out the reaction IMP + L-aspartate + GTP = N(6)-(1,2-dicarboxyethyl)-AMP + GDP + phosphate + 2 H(+). It functions in the pathway purine metabolism; AMP biosynthesis via de novo pathway; AMP from IMP: step 1/2. Functionally, plays an important role in the de novo pathway and in the salvage pathway of purine nucleotide biosynthesis. Catalyzes the first committed step in the biosynthesis of AMP from IMP. This chain is Adenylosuccinate synthetase, found in Paracoccidioides brasiliensis (strain Pb03).